A 319-amino-acid chain; its full sequence is MSTEKIQKVVIIGSGPAGHTAGIYAGRARLEPLMFEGFMAGGVAAGGQLTTTTEIENFPGFPIDISGSELMDKMREQNIKCGTTIETKTISKVDLKQRPFTIYVEDEEDKPIKAQSIIIATGATAKRMGVPGETEFWSKGVSACAVCDGALPIYRNKHLVVVGGGDTAAEEATFLTHFASKVTLLVRRNVMRASKAMQQKVFSNPKIEVLWDTTLVEIKGEKSVTSVGIYNSETKVSSNLDAQGLFYAIGHTPNSAFLNGQLNTDETGYIITQPGSTKTNVEGVFACGDVQDKVYRQAITAAGNGCMAALDCERFLSSL.

36 to 48 (EGFMAGGVAAGGQ) serves as a coordination point for FAD. A disulfide bridge connects residues C144 and C147. 289-298 (DVQDKVYRQA) serves as a coordination point for FAD.

This sequence belongs to the class-II pyridine nucleotide-disulfide oxidoreductase family. Homodimer. FAD is required as a cofactor.

The catalysed reaction is [thioredoxin]-dithiol + NADP(+) = [thioredoxin]-disulfide + NADPH + H(+). The chain is Thioredoxin reductase (trrA) from Dictyostelium discoideum (Social amoeba).